The primary structure comprises 180 residues: Adenine phosphoribosyltransferase (180 aa).

Ser2 is subject to N-acetylserine. Ser4, Ser15, and Ser30 each carry phosphoserine. Tyr60 is modified (phosphotyrosine). Phosphoserine is present on Ser66. Position 114 is an N6-acetyllysine (Lys114). Thr135 carries the post-translational modification Phosphothreonine.

Belongs to the purine/pyrimidine phosphoribosyltransferase family. As to quaternary structure, homodimer.

The protein resides in the cytoplasm. The catalysed reaction is AMP + diphosphate = 5-phospho-alpha-D-ribose 1-diphosphate + adenine. The protein operates within purine metabolism; AMP biosynthesis via salvage pathway; AMP from adenine: step 1/1. Catalyzes a salvage reaction resulting in the formation of AMP, that is energically less costly than de novo synthesis. This chain is Adenine phosphoribosyltransferase, found in Rattus norvegicus (Rat).